The sequence spans 175 residues: Coagulogen (175 aa).

Intrachain disulfides connect C8–C167, C10–C95, C60–C161, C65–C121, C75–C168, C88–C140, C127–C170, and C134–C172.

It belongs to the coagulin family. In terms of assembly, coagulogen is cleaved after Arg-18 and Arg-46 by a clotting enzyme contained in the hemocyte and activated by a bacterial endotoxin (lipopolysaccharide). This cleavage releases the peptide C and leaves 2 chains of coagulin, A and B, linked by two disulfide bonds. Coagulin molecules interlink to form a gel. In terms of tissue distribution, hemolymph.

It is found in the secreted. Its function is as follows. Coagulogen is a gel-forming protein of hemolymph; it hinders the spread of invaders by immobilizing them. This chain is Coagulogen, found in Tachypleus gigas (Southeast Asian horseshoe crab).